A 705-amino-acid chain; its full sequence is Elongation factor G (705 aa).

The tr-type G domain occupies 8–290 (HRYRNIGIMA…GVIHLLPSPA (283 aa)). Residues 17 to 24 (AHIDAGKT), 88 to 92 (DTPGH), and 142 to 145 (NKMD) each bind GTP.

Belongs to the TRAFAC class translation factor GTPase superfamily. Classic translation factor GTPase family. EF-G/EF-2 subfamily.

Its subcellular location is the cytoplasm. Functionally, catalyzes the GTP-dependent ribosomal translocation step during translation elongation. During this step, the ribosome changes from the pre-translocational (PRE) to the post-translocational (POST) state as the newly formed A-site-bound peptidyl-tRNA and P-site-bound deacylated tRNA move to the P and E sites, respectively. Catalyzes the coordinated movement of the two tRNA molecules, the mRNA and conformational changes in the ribosome. This is Elongation factor G from Xylella fastidiosa (strain M12).